A 269-amino-acid chain; its full sequence is 3-methyl-2-oxobutanoate hydroxymethyltransferase (269 aa).

Asp43 and Asp82 together coordinate Mg(2+). Residues 43-44 (DS), Asp82, and Lys110 each bind 3-methyl-2-oxobutanoate. Residue Glu112 coordinates Mg(2+). Glu179 functions as the Proton acceptor in the catalytic mechanism.

Belongs to the PanB family. In terms of assembly, homodecamer; pentamer of dimers. Requires Mg(2+) as cofactor.

It is found in the cytoplasm. The enzyme catalyses 3-methyl-2-oxobutanoate + (6R)-5,10-methylene-5,6,7,8-tetrahydrofolate + H2O = 2-dehydropantoate + (6S)-5,6,7,8-tetrahydrofolate. It participates in cofactor biosynthesis; (R)-pantothenate biosynthesis; (R)-pantoate from 3-methyl-2-oxobutanoate: step 1/2. Catalyzes the reversible reaction in which hydroxymethyl group from 5,10-methylenetetrahydrofolate is transferred onto alpha-ketoisovalerate to form ketopantoate. This is 3-methyl-2-oxobutanoate hydroxymethyltransferase from Acinetobacter baylyi (strain ATCC 33305 / BD413 / ADP1).